The primary structure comprises 237 residues: 2,3,4,5-tetrahydropyridine-2,6-dicarboxylate N-acetyltransferase (237 aa).

It belongs to the transferase hexapeptide repeat family. DapH subfamily.

The enzyme catalyses (S)-2,3,4,5-tetrahydrodipicolinate + acetyl-CoA + H2O = L-2-acetamido-6-oxoheptanedioate + CoA. It participates in amino-acid biosynthesis; L-lysine biosynthesis via DAP pathway; LL-2,6-diaminopimelate from (S)-tetrahydrodipicolinate (acetylase route): step 1/3. Its function is as follows. Catalyzes the transfer of an acetyl group from acetyl-CoA to tetrahydrodipicolinate. The protein is 2,3,4,5-tetrahydropyridine-2,6-dicarboxylate N-acetyltransferase of Alkaliphilus metalliredigens (strain QYMF).